Consider the following 1989-residue polypeptide: Exophilin-5 (1989 aa).

The 57-residue stretch at 7 to 63 folds into the RabBD domain; the sequence is AFDFSFLNDEEARKILQVLERNEELQRAEKDRISKLQKTKRDIRWLQGVTGEWFEEI. Disordered regions lie at residues 93–117 and 348–391; these read NDPI…PFSS and TQSK…FLRA. Polar residues-rich tracts occupy residues 100 to 111 and 359 to 376; these read TSRSKNVTNQKK and HQQS…WNRS. A compositionally biased stretch (basic and acidic residues) spans 377-389; sequence DSSRDRENQEEFL. Serine 603 carries the post-translational modification Phosphoserine. Disordered regions lie at residues 631 to 651, 806 to 827, and 882 to 933; these read FSQI…NPTV, STAS…RTDQ, and AALP…NQKN. The segment covering 641–651 has biased composition (polar residues); that stretch reads PQSPNLQNPTV. Serine 806 and serine 809 each carry phosphoserine. Residues 891 to 909 are compositionally biased toward polar residues; it reads KNSSLDAPVVPSTTVFSRR. A compositionally biased stretch (basic and acidic residues) spans 910 to 927; sequence SPSDKDPSLGEREEKDNA. Phosphoserine occurs at positions 1028 and 1086. 3 disordered regions span residues 1094–1113, 1124–1152, and 1365–1493; these read EATE…VRKG, SCPS…ASEL, and EIFS…TNCQ. Polar residues predominate over residues 1098–1110; it reads RMTNVKSSGSTSV. Serine 1124 carries the phosphoserine modification. The span at 1379 to 1390 shows a compositional bias: basic and acidic residues; it reads SENKKERGKKLQ. Over residues 1416-1431 the composition is skewed to low complexity; that stretch reads SINSSNSGPSSLPALS. The span at 1434-1447 shows a compositional bias: polar residues; the sequence is NIGNSQTRRSSWEC. Serine 1505 is subject to Phosphoserine. 2 disordered regions span residues 1521–1590 and 1644–1737; these read EETQ…NRSS and PEPT…PITF. Composition is skewed to basic and acidic residues over residues 1551 to 1560, 1573 to 1589, and 1658 to 1670; these read ESRKAEDEMQ, NKNK…ENRS, and RLSE…KKSE. Polar residues predominate over residues 1685–1709; it reads THVSNQKSNSISQRHQNEFKNVSES. 4 positions are modified to phosphoserine: serine 1753, serine 1768, serine 1821, and serine 1851. Residues 1921–1989 are disordered; the sequence is FLKDDLRNPP…LDENDKESEL (69 aa). A compositionally biased stretch (low complexity) spans 1933–1943; it reads SESLSSNSPSS. Over residues 1959-1989 the composition is skewed to acidic residues; the sequence is YEDDPVDSDCDTDTTTDDEYYLDENDKESEL.

As to quaternary structure, interacts with RAB27A. In terms of tissue distribution, expressed in keratinocytes.

Functionally, may act as Rab effector protein and play a role in vesicle trafficking. This is Exophilin-5 from Homo sapiens (Human).